A 32-amino-acid chain; its full sequence is Photosystem II reaction center protein Z (32 aa).

Residues phenylalanine 9–valine 31 form a helical membrane-spanning segment.

Belongs to the PsbZ family. As to quaternary structure, PSII is composed of 1 copy each of membrane proteins PsbA, PsbB, PsbC, PsbD, PsbE, PsbF, PsbH, PsbI, PsbJ, PsbK, PsbL, PsbM, PsbT, PsbY, PsbZ, Psb30/Ycf12, at least 3 peripheral proteins of the oxygen-evolving complex and a large number of cofactors. It forms dimeric complexes.

The protein localises to the plastid. It is found in the chloroplast thylakoid membrane. Functionally, may control the interaction of photosystem II (PSII) cores with the light-harvesting antenna, regulates electron flow through the 2 photosystem reaction centers. PSII is a light-driven water plastoquinone oxidoreductase, using light energy to abstract electrons from H(2)O, generating a proton gradient subsequently used for ATP formation. The polypeptide is Photosystem II reaction center protein Z (Euglena viridis (Cercaria viridis)).